The following is a 272-amino-acid chain: Protein STAY-GREEN 1, chloroplastic (272 aa).

Residues 1–50 constitute a chloroplast transit peptide; the sequence is MGTLTTSLVVPSKLNNEQQSSIFIHKTRRKCKKNQSIVPVARLFGPAIFE. The disordered stretch occupies residues 201 to 222; it reads TSPSSSSGGVGGVKSTSFTSNS.

Belongs to the staygreen family. As to quaternary structure, interacts with PSY1.

It is found in the plastid. The protein localises to the chloroplast. Functionally, required to trigger chlorophyll degradation during leaf senescence and fruit ripening. Binds directly PSY1 to regulate the accumulation of lycopene and beta-carotene in the maturing fruits. This is Protein STAY-GREEN 1, chloroplastic from Solanum lycopersicum (Tomato).